A 108-amino-acid polypeptide reads, in one-letter code: Peptidyl-prolyl cis-trans isomerase FKBP1B (108 aa).

A PPIase FKBP-type domain is found at 20 to 108; sequence GQTCVVHYTG…IFGVELLNLE (89 aa).

This sequence belongs to the FKBP-type PPIase family. FKBP1 subfamily. Identified in a complex composed of RYR2, FKBP1B, PKA catalytic subunit, PRKAR2A, AKAP6, and the protein phosphatases PP2A and PP1. Interacts directly with RYR2.

Its subcellular location is the cytoplasm. It localises to the sarcoplasmic reticulum. It carries out the reaction [protein]-peptidylproline (omega=180) = [protein]-peptidylproline (omega=0). Inhibited by both FK506 and rapamycin. Has the potential to contribute to the immunosuppressive and toxic effects of FK506 and rapamycin. PPIases accelerate the folding of proteins. It catalyzes the cis-trans isomerization of proline imidic peptide bonds in oligopeptides. The sequence is that of Peptidyl-prolyl cis-trans isomerase FKBP1B (FKBP1B) from Oryctolagus cuniculus (Rabbit).